Here is a 547-residue protein sequence, read N- to C-terminus: Myrosinase 2 (547 aa).

The signal sequence occupies residues 1 to 28; that stretch reads MQHNTYIYILTMKLLGFALAILLVVATC. Disulfide bonds link Cys36–Cys460, Cys44–Cys456, and Cys236–Cys244. A beta-D-glucoside is bound by residues Gln69, His171, and 216 to 217; that span reads NQ. An N-linked (GlcNAc...) asparagine glycan is attached at Asn340. Tyr359 lines the a beta-D-glucoside pocket. A glycan (N-linked (GlcNAc...) asparagine) is linked at Asn384. Residues Glu430, Trp479, 486 to 487, and Phe495 contribute to the a beta-D-glucoside site; that span reads EF. The Nucleophile role is filled by Glu430. Asn504 carries N-linked (GlcNAc...) asparagine glycosylation.

Belongs to the glycosyl hydrolase 1 family. Interacts with MVP1. In terms of tissue distribution, expressed in phloem-associated cells.

The enzyme catalyses a thioglucoside + H2O = a sugar + a thiol.. Functionally, may degrade glucosinolates (glucose residue linked by a thioglucoside bound to an amino acid derivative) to glucose, sulfate and any of the products: thiocyanates, isothiocyanates, nitriles, epithionitriles or oxazolidine-2-thiones. These toxic degradation products can deter insect herbivores. Seems to function in abscisic acid (ABA) and methyl jasmonate (MeJA) signaling in guard cells. Functionally redundant with TGG1. In Arabidopsis thaliana (Mouse-ear cress), this protein is Myrosinase 2.